A 529-amino-acid polypeptide reads, in one-letter code: Bifunctional purine biosynthesis protein PurH (529 aa).

Residues 1–148 (MQQRRPVRRA…KNHKDVAIVV (148 aa)) enclose the MGS-like domain. Lys-287 is subject to N6-acetyllysine.

It belongs to the PurH family.

It catalyses the reaction (6R)-10-formyltetrahydrofolate + 5-amino-1-(5-phospho-beta-D-ribosyl)imidazole-4-carboxamide = 5-formamido-1-(5-phospho-D-ribosyl)imidazole-4-carboxamide + (6S)-5,6,7,8-tetrahydrofolate. The catalysed reaction is IMP + H2O = 5-formamido-1-(5-phospho-D-ribosyl)imidazole-4-carboxamide. The protein operates within purine metabolism; IMP biosynthesis via de novo pathway; 5-formamido-1-(5-phospho-D-ribosyl)imidazole-4-carboxamide from 5-amino-1-(5-phospho-D-ribosyl)imidazole-4-carboxamide (10-formyl THF route): step 1/1. Its pathway is purine metabolism; IMP biosynthesis via de novo pathway; IMP from 5-formamido-1-(5-phospho-D-ribosyl)imidazole-4-carboxamide: step 1/1. In Escherichia coli O7:K1 (strain IAI39 / ExPEC), this protein is Bifunctional purine biosynthesis protein PurH.